Reading from the N-terminus, the 337-residue chain is CMP-sialic acid transporter (337 aa).

Over 1 to 9 (MAAPRDNVT) the chain is Cytoplasmic. A helical transmembrane segment spans residues 10–30 (LLFKLYCLAVMTLMAAVYTIA). Residues 31–45 (LRYTRTSDKELYFST) are Lumenal-facing. The chain crosses the membrane as a helical span at residues 46-64 (TAVCITEVIKLLLSVGILA). Lysine 55 is a binding site for CMP-N-acetyl-beta-neuraminate. Residues 65-87 (KETGSLGRFKASLRENVLGSPKE) are Cytoplasmic-facing. A helical transmembrane segment spans residues 88–108 (LLKLSVPSLVYAVQNNMAFLA). 101–102 (QN) is a CMP-N-acetyl-beta-neuraminate binding site. At 109–114 (LSNLDA) the chain is on the lumenal side. The helical transmembrane segment at 115–135 (AVYQVTYQLKIPCTALCTVLM) threads the bilayer. Residue 117-124 (YQVTYQLK) participates in CMP-N-acetyl-beta-neuraminate binding. At 136–141 (LNRTLS) the chain is on the cytoplasmic side. Residues 142–160 (KLQWVSVFMLCAGVTLVQW) form a helical membrane-spanning segment. At 161 to 175 (KPAQATKVVVEQNPL) the chain is on the lumenal side. A helical membrane pass occupies residues 176–196 (LGFGAIAIAVLCSGFAGVYFE). Position 188 (serine 188) interacts with CMP-N-acetyl-beta-neuraminate. The Cytoplasmic segment spans residues 197–209 (KVLKSSDTSLWVR). A CMP-N-acetyl-beta-neuraminate-binding site is contributed by 210-214 (NIQMY). A helical transmembrane segment spans residues 210 to 228 (NIQMYLSGIIVTLAGVYLS). Residues 229–243 (DGAEIKEKGFFYGYT) lie on the Lumenal side of the membrane. Residues 244-262 (YYVWFVIFLASVGGLYTSV) form a helical membrane-spanning segment. The Cytoplasmic segment spans residues 263-269 (VVKYTDN). Residues 270-288 (IMKGFSAAAAIVLSTIASV) traverse the membrane as a helical segment. Residue lysine 272 participates in CMP-N-acetyl-beta-neuraminate binding. At 289-296 (MLFGLQIT) the chain is on the lumenal side. Residues 297–315 (LTFALGTLLVCVSIYLYGL) form a helical membrane-spanning segment. Over 316 to 337 (PRQDTTSIQQGETASKERVIGV) the chain is Cytoplasmic. Residues 316-337 (PRQDTTSIQQGETASKERVIGV) form a disordered region.

Belongs to the nucleotide-sugar transporter family. SLC35A subfamily. In terms of assembly, monomer.

The protein localises to the golgi apparatus membrane. It localises to the golgi apparatus. The enzyme catalyses CMP-N-acetyl-beta-neuraminate(in) + CMP(out) = CMP-N-acetyl-beta-neuraminate(out) + CMP(in). It carries out the reaction CMP-N-acetyl-beta-neuraminate(in) + AMP(out) = CMP-N-acetyl-beta-neuraminate(out) + AMP(in). The catalysed reaction is CDP-L-ribitol(in) + CDP(out) = CDP-L-ribitol(out) + CDP(in). It catalyses the reaction UMP(out) + CMP-N-acetyl-beta-neuraminate(in) = UMP(in) + CMP-N-acetyl-beta-neuraminate(out). Its function is as follows. Transports CMP-sialic acid from the cytosol into the Golgi apparatus, functioning as an antiporter that exchanges CMP-sialic acid for CMP. Binds both CMP-sialic acid and free CMP, but has higher affinity for free CMP. Also able to exchange CMP-sialic acid for AMP and UMP. Also mediates the transport of CDP-ribitol. In Homo sapiens (Human), this protein is CMP-sialic acid transporter.